The sequence spans 219 residues: MGFDYQRAVMLQRILSERVLAELDSFPRIDPSRIRSVAGVDASYRGGVQVGSAVLMDYRAKMPLAYTCLTSKPPIPYVPGLLAFREAPVYIKALHRLPAKPDIILVDGHGLSHPRAFGIATHIGLVLSTPSIGVAKKPLYGEVEEVNGRKLVRAHGRIVGEVVETNQGSEIYVSIGYLIRLEDAVEVVRHLMEPGLKLPLPIHLADNYSRSKCIKELRL.

2 residues coordinate Mg(2+): D41 and D107.

The protein belongs to the endonuclease V family. Mg(2+) is required as a cofactor.

It localises to the cytoplasm. It carries out the reaction Endonucleolytic cleavage at apurinic or apyrimidinic sites to products with a 5'-phosphate.. In terms of biological role, DNA repair enzyme involved in the repair of deaminated bases. Selectively cleaves double-stranded DNA at the second phosphodiester bond 3' to a deoxyinosine leaving behind the intact lesion on the nicked DNA. In Desulfurococcus amylolyticus (strain DSM 18924 / JCM 16383 / VKM B-2413 / 1221n) (Desulfurococcus kamchatkensis), this protein is Endonuclease V.